The sequence spans 228 residues: 3-dehydroquinate dehydratase (228 aa).

3-dehydroquinate contacts are provided by residues Ser26, 51–53, and Arg84; that span reads EIR. Catalysis depends on His127, which acts as the Proton donor/acceptor. The active-site Schiff-base intermediate with substrate is the Lys150. 3-dehydroquinate is bound by residues Arg190, Thr209, and Gln213.

It belongs to the type-I 3-dehydroquinase family. Homodimer.

It catalyses the reaction 3-dehydroquinate = 3-dehydroshikimate + H2O. It functions in the pathway metabolic intermediate biosynthesis; chorismate biosynthesis; chorismate from D-erythrose 4-phosphate and phosphoenolpyruvate: step 3/7. Functionally, involved in the third step of the chorismate pathway, which leads to the biosynthesis of aromatic amino acids. Catalyzes the cis-dehydration of 3-dehydroquinate (DHQ) and introduces the first double bond of the aromatic ring to yield 3-dehydroshikimate. This is 3-dehydroquinate dehydratase from Thermoplasma acidophilum (strain ATCC 25905 / DSM 1728 / JCM 9062 / NBRC 15155 / AMRC-C165).